We begin with the raw amino-acid sequence, 236 residues long: THO complex subunit 7B (236 aa).

Residues 99–228 adopt a coiled-coil conformation; the sequence is EANLREKESF…IRSASEDQRN (130 aa).

The protein belongs to the THOC7 family. Component of the THO complex, which is composed of THO1, THO2, THO3, THO5, THO6 and THO7.

Its subcellular location is the nucleus. Acts as a component of the THO subcomplex of the TREX complex which is thought to couple mRNA transcription, processing and nuclear export. This chain is THO complex subunit 7B (THO7B), found in Arabidopsis thaliana (Mouse-ear cress).